The primary structure comprises 395 residues: Chorismate synthase (395 aa).

This sequence belongs to the chorismate synthase family. As to quaternary structure, homotetramer. FMNH2 serves as cofactor.

The catalysed reaction is 5-O-(1-carboxyvinyl)-3-phosphoshikimate = chorismate + phosphate. It functions in the pathway metabolic intermediate biosynthesis; chorismate biosynthesis; chorismate from D-erythrose 4-phosphate and phosphoenolpyruvate: step 7/7. This chain is Chorismate synthase, found in Schizosaccharomyces pombe (strain 972 / ATCC 24843) (Fission yeast).